Consider the following 165-residue polypeptide: uncharacterized protein (165 aa).

Residues 76–161 (LEQVESALDD…LKRLIREKLT (86 aa)) form the RCK C-terminal domain.

This is an uncharacterized protein from Bacillus subtilis (strain 168).